Consider the following 867-residue polypeptide: GRB2-associated and regulator of MAPK protein 1 (867 aa).

Residues 12-322 (NNITWSTTTL…GLLQGESWFE (311 aa)) are CABIT. Y464 is subject to Phosphotyrosine. 3 disordered regions span residues 511-530 (SADV…AVKE), 536-594 (DAPP…QIES), and 735-758 (PPRT…TADA). Polar residues-rich tracts occupy residues 544-554 (SSKQAGSSSAT) and 569-581 (SPSP…SSGL). Basic and acidic residues predominate over residues 740–749 (KCTDAKKDAE). One can recognise an SAM domain in the interval 802 to 867 (ISIEEISKSL…QFINGWRPKM (66 aa)).

Belongs to the GAREM family.

Adapter protein that may provide a link between cell surface epidermal growth factor receptor and the MAPK/ERK signaling pathway. May promote cell proliferation. The protein is GRB2-associated and regulator of MAPK protein 1 (garem1) of Danio rerio (Zebrafish).